We begin with the raw amino-acid sequence, 468 residues long: Putative proline/betaine transporter (468 aa).

12 consecutive transmembrane segments (helical) span residues Val20 to Ala42, Phe63 to Ile83, Val91 to Pro111, Met115 to Thr135, Ile164 to Leu184, Ala191 to Leu211, Ile246 to Tyr266, Val284 to Ala304, Val312 to Asn332, Leu336 to Thr356, Val376 to Leu396, and Ile403 to Val423.

The protein belongs to the major facilitator superfamily. Metabolite:H+ Symporter (MHS) family (TC 2.A.1.6) family.

The protein resides in the cell membrane. Functionally, may be a proton symporter involved in the uptake of osmolytes such as proline and glycine betaine. This Staphylococcus haemolyticus (strain JCSC1435) protein is Putative proline/betaine transporter (proP).